Here is a 264-residue protein sequence, read N- to C-terminus: Thymidylate synthase (264 aa).

Arg-21 is a dUMP binding site. (6R)-5,10-methylene-5,6,7,8-tetrahydrofolate is bound at residue His-51. 126-127 (RR) provides a ligand contact to dUMP. The Nucleophile role is filled by Cys-146. Residues 166–169 (RSCD), Asn-177, and 207–209 (HLY) contribute to the dUMP site. Asp-169 contributes to the (6R)-5,10-methylene-5,6,7,8-tetrahydrofolate binding site. Ala-263 contributes to the (6R)-5,10-methylene-5,6,7,8-tetrahydrofolate binding site.

Belongs to the thymidylate synthase family. Bacterial-type ThyA subfamily. Homodimer.

The protein resides in the cytoplasm. It catalyses the reaction dUMP + (6R)-5,10-methylene-5,6,7,8-tetrahydrofolate = 7,8-dihydrofolate + dTMP. Its pathway is pyrimidine metabolism; dTTP biosynthesis. In terms of biological role, catalyzes the reductive methylation of 2'-deoxyuridine-5'-monophosphate (dUMP) to 2'-deoxythymidine-5'-monophosphate (dTMP) while utilizing 5,10-methylenetetrahydrofolate (mTHF) as the methyl donor and reductant in the reaction, yielding dihydrofolate (DHF) as a by-product. This enzymatic reaction provides an intracellular de novo source of dTMP, an essential precursor for DNA biosynthesis. The protein is Thymidylate synthase of Aeromonas salmonicida (strain A449).